Here is a 213-residue protein sequence, read N- to C-terminus: Cytochrome b6 (213 aa).

Residues 30-50 form a helical membrane-spanning segment; the sequence is IFFCLGGLTLLCFIVQCLTGI. A heme c-binding site is contributed by C33. Positions 84 and 98 each coordinate heme b. 3 consecutive transmembrane segments (helical) span residues 88-108, 114-134, and 184-204; these read CQLMILLVFLHMLRVYYTGAF, LNWVAGCFLLVLSLALAFTGY, and LHVMILPAVAIIFLVAHFIMI. Heme b-binding residues include H185 and H200.

It belongs to the cytochrome b family. PetB subfamily. In terms of assembly, the subunits of the cytochrome bc complex are a Rieske Fe-S protein (PetC), cytochrome b6 (PetB), subunit IV (PetD), and a diheme cytochrome c (PetX). It depends on heme b as a cofactor. Heme c is required as a cofactor.

The protein resides in the cell membrane. Its function is as follows. Component of the cytochrome bc complex which donates electrons to the photosynthetic reaction center. The sequence is that of Cytochrome b6 from Heliomicrobium gestii (Heliobacterium gestii).